A 341-amino-acid chain; its full sequence is GTP 3',8-cyclase (341 aa).

Positions 17–235 (TYGRVATDLR…LRTRFELTAE (219 aa)) constitute a Radical SAM core domain. Residue R26 coordinates GTP. Residues C33 and C37 each coordinate [4Fe-4S] cluster. Residue Y39 participates in S-adenosyl-L-methionine binding. Residue C40 coordinates [4Fe-4S] cluster. R77 is a binding site for GTP. An S-adenosyl-L-methionine-binding site is contributed by G81. T108 lines the GTP pocket. S132 provides a ligand contact to S-adenosyl-L-methionine. Position 169 (K169) interacts with GTP. M203 lines the S-adenosyl-L-methionine pocket. Residues C268 and C271 each coordinate [4Fe-4S] cluster. Residue 273 to 275 (RTR) coordinates GTP. A [4Fe-4S] cluster-binding site is contributed by C285.

It belongs to the radical SAM superfamily. MoaA family. Monomer and homodimer. The cofactor is [4Fe-4S] cluster.

The enzyme catalyses GTP + AH2 + S-adenosyl-L-methionine = (8S)-3',8-cyclo-7,8-dihydroguanosine 5'-triphosphate + 5'-deoxyadenosine + L-methionine + A + H(+). It participates in cofactor biosynthesis; molybdopterin biosynthesis. In terms of biological role, catalyzes the cyclization of GTP to (8S)-3',8-cyclo-7,8-dihydroguanosine 5'-triphosphate. In Streptomyces coelicolor (strain ATCC BAA-471 / A3(2) / M145), this protein is GTP 3',8-cyclase.